The chain runs to 518 residues: Glutamate--cysteine ligase (518 aa).

Belongs to the glutamate--cysteine ligase type 1 family. Type 1 subfamily.

It catalyses the reaction L-cysteine + L-glutamate + ATP = gamma-L-glutamyl-L-cysteine + ADP + phosphate + H(+). Its pathway is sulfur metabolism; glutathione biosynthesis; glutathione from L-cysteine and L-glutamate: step 1/2. The polypeptide is Glutamate--cysteine ligase (Shigella boydii serotype 4 (strain Sb227)).